We begin with the raw amino-acid sequence, 248 residues long: Large ribosomal subunit protein bL9m (248 aa).

A mitochondrion-targeting transit peptide spans 1-25 (MLKNIYVTPLNLLKSATSLQQQVRT).

Belongs to the bacterial ribosomal protein bL9 family. As to quaternary structure, component of the mitochondrial ribosome large subunit (39S) which comprises a 16S rRNA and about 50 distinct proteins.

The protein localises to the mitochondrion. The chain is Large ribosomal subunit protein bL9m (mRpL9) from Drosophila melanogaster (Fruit fly).